The following is a 170-amino-acid chain: Transcription factor E (170 aa).

Positions 1–93 (MKEAYLYIVE…TWYVDDDVIR (93 aa)) constitute an HTH TFE/IIEalpha-type domain.

It belongs to the TFE family. As to quaternary structure, monomer. Interaction with RNA polymerase subunits RpoF and RpoE is necessary for Tfe stimulatory transcription activity. Able to interact with Tbp and RNA polymerase in the absence of DNA promoter. Interacts both with the preinitiation and elongation complexes.

Transcription factor that plays a role in the activation of archaeal genes transcribed by RNA polymerase. Facilitates transcription initiation by enhancing TATA-box recognition by TATA-box-binding protein (Tbp), and transcription factor B (Tfb) and RNA polymerase recruitment. Not absolutely required for transcription in vitro, but particularly important in cases where Tbp or Tfb function is not optimal. It dynamically alters the nucleic acid-binding properties of RNA polymerases by stabilizing the initiation complex and destabilizing elongation complexes. Seems to translocate with the RNA polymerase following initiation and acts by binding to the non template strand of the transcription bubble in elongation complexes. This is Transcription factor E from Pyrobaculum neutrophilum (strain DSM 2338 / JCM 9278 / NBRC 100436 / V24Sta) (Thermoproteus neutrophilus).